A 144-amino-acid chain; its full sequence is MLLPKRVKYRREHRGKMRGRAKGGTEVHFGEFGIQALEASWITNRQIEAARIAMTRYMKRGGKVWIKIFPSKPYTAKPLEVRMGSGKGAPEGWVAVVKPGKVLFEISGVSEEVAREALRLASHKLPIKTKFVKREEIGGESNES.

The protein belongs to the universal ribosomal protein uL16 family. As to quaternary structure, part of the 50S ribosomal subunit.

Functionally, binds 23S rRNA and is also seen to make contacts with the A and possibly P site tRNAs. The polypeptide is Large ribosomal subunit protein uL16 (Bacillus subtilis (strain 168)).